Here is a 270-residue protein sequence, read N- to C-terminus: MGGQVRVAIVGAGGRMGRTLIESAYHQEHIRLGAAIERPGSSLVGVDAGELVGVGKLNVIIMDSLDYATDDFDVLIDFTAPEASIVHLDWCVRHKKAMVIGTTGFNHAQKEQINAFAEQTPVVMAPNMSVGVNLMWKLLELAAEVMGDYTDIEIIEGHHRYKKDAPSGTALKMGEVIAKTLGRDLEKCAVYGREGITGERDRETIGFATVRAGDLVGEHTAMFADIGERLEITHKASSRMTFANGAMRAAHWLVEQKPGLYDMQQVLGLN.

NAD(+) contacts are provided by residues 11-16 (GAGGRM) and Glu37. Arg38 lines the NADP(+) pocket. NAD(+) contacts are provided by residues 101–103 (GTT) and 125–128 (APNM). Residue His158 is the Proton donor/acceptor of the active site. His159 lines the (S)-2,3,4,5-tetrahydrodipicolinate pocket. The Proton donor role is filled by Lys162. 168–169 (GT) serves as a coordination point for (S)-2,3,4,5-tetrahydrodipicolinate.

This sequence belongs to the DapB family.

The protein localises to the cytoplasm. It carries out the reaction (S)-2,3,4,5-tetrahydrodipicolinate + NAD(+) + H2O = (2S,4S)-4-hydroxy-2,3,4,5-tetrahydrodipicolinate + NADH + H(+). It catalyses the reaction (S)-2,3,4,5-tetrahydrodipicolinate + NADP(+) + H2O = (2S,4S)-4-hydroxy-2,3,4,5-tetrahydrodipicolinate + NADPH + H(+). It functions in the pathway amino-acid biosynthesis; L-lysine biosynthesis via DAP pathway; (S)-tetrahydrodipicolinate from L-aspartate: step 4/4. Functionally, catalyzes the conversion of 4-hydroxy-tetrahydrodipicolinate (HTPA) to tetrahydrodipicolinate. The polypeptide is 4-hydroxy-tetrahydrodipicolinate reductase (Shewanella sp. (strain ANA-3)).